The chain runs to 715 residues: ATP-dependent DNA helicase Hel308 (715 aa).

Positions 8-36 (MPIEDLKLPSNVIEIIKKRGIKKLNPPQT) match the Q motif motif. ATP-binding positions include Gln-35 and 53–60 (SPTGSGKT). Residues 40–203 (KKGLLEGNRL…WLGAEPVATN (164 aa)) enclose the Helicase ATP-binding domain. Residues 152–155 (DELH) carry the DEAH box motif. One can recognise a Helicase C-terminal domain in the interval 236 to 442 (HGDDAIIAYT…ERAFYTFLLG (207 aa)).

It belongs to the helicase family. Hel308 subfamily. As to quaternary structure, monomer.

The enzyme catalyses Couples ATP hydrolysis with the unwinding of duplex DNA by translocating in the 3'-5' direction.. It catalyses the reaction ATP + H2O = ADP + phosphate + H(+). Its function is as follows. DNA-dependent ATPase and 3'-5' DNA helicase that may be involved in repair of stalled replication forks. A low processivity 3'-5' helicase. Unwinds short dsDNA substrates with 3'-overhangs (25 bp dsDNA with 25 base overhang), less active on longer dsDNA substrates. Also unwinds the lagging strand of a stalled replication fork (but the leading strand was not tested). Binds ssDNA, but dsDNA about 35-fold less well. Able to displace streptavidin from biotinylated ssDNA, which is partially inhibited by DNA-binding proteins, suggesting it may play a role in stripping proteins from stalled replication forks. The sequence is that of ATP-dependent DNA helicase Hel308 from Saccharolobus solfataricus (strain 98/2) (Sulfolobus solfataricus).